We begin with the raw amino-acid sequence, 91 residues long: UPF0512 protein M (91 aa).

This sequence belongs to the UPF0512 family.

The polypeptide is UPF0512 protein M (Dictyostelium discoideum (Social amoeba)).